A 282-amino-acid polypeptide reads, in one-letter code: Bifunctional protein FolD (282 aa).

Residues 164–166 (GRS) and Ser-189 each bind NADP(+).

It belongs to the tetrahydrofolate dehydrogenase/cyclohydrolase family. Homodimer.

The catalysed reaction is (6R)-5,10-methylene-5,6,7,8-tetrahydrofolate + NADP(+) = (6R)-5,10-methenyltetrahydrofolate + NADPH. The enzyme catalyses (6R)-5,10-methenyltetrahydrofolate + H2O = (6R)-10-formyltetrahydrofolate + H(+). The protein operates within one-carbon metabolism; tetrahydrofolate interconversion. In terms of biological role, catalyzes the oxidation of 5,10-methylenetetrahydrofolate to 5,10-methenyltetrahydrofolate and then the hydrolysis of 5,10-methenyltetrahydrofolate to 10-formyltetrahydrofolate. This Lactobacillus gasseri (strain ATCC 33323 / DSM 20243 / BCRC 14619 / CIP 102991 / JCM 1131 / KCTC 3163 / NCIMB 11718 / NCTC 13722 / AM63) protein is Bifunctional protein FolD.